We begin with the raw amino-acid sequence, 258 residues long: MELIRVLANLLILQLSYAQKSSELIIGGDECNIDEHRFLVALYKSGRFRCGGTLINQEWVLTAAHCDRRNMEIKLGMHSKNVPNEDEQRRVPKEKFFCDSNKNYTQWNKDIMLIRLNSPVNNSTHIAPLSLPSSPPIVGSVCRIMGWGTITSPNETYPDVPHCANINLFNYTVCHGAHAGLPATSRTLCAGVLEGGKDTCKGDSGGPLICNGQFQGIVSWGGHPCAQPREPGVYTKVFDHLDWIQNIIAGSTTATCPL.

The first 18 residues, Met-1–Ala-18, serve as a signal peptide directing secretion. The propeptide occupies Gln-19 to Leu-24. The region spanning Ile-25 to Ala-249 is the Peptidase S1 domain. 6 cysteine pairs are disulfide-bonded: Cys-31/Cys-163, Cys-50/Cys-66, Cys-98/Cys-256, Cys-142/Cys-210, Cys-174/Cys-189, and Cys-200/Cys-225. The active-site Charge relay system is His-65. Asn-103 is a glycosylation site (N-linked (GlcNAc...) asparagine). Asp-110 serves as the catalytic Charge relay system. N-linked (GlcNAc...) asparagine glycans are attached at residues Asn-121, Asn-122, Asn-154, and Asn-170. Residue Ser-204 is the Charge relay system of the active site.

It belongs to the peptidase S1 family. Snake venom subfamily. As to quaternary structure, monomer. As to expression, expressed by the venom gland.

The protein localises to the secreted. Its activity is inhibited by PMSF and p-nitrophenyl-p-guanidinobenzoate (NPGB). In terms of biological role, snake venom serine protease. Degrades concomitantly alpha- (FGA) and beta-chains of fibrinogen (FGB). The protein is Alpha- and beta-fibrinogenase stejnefibrase-1 of Trimeresurus stejnegeri (Chinese green tree viper).